The primary structure comprises 427 residues: Glutamyl-tRNA reductase (427 aa).

Residues 49 to 52 (TCNR), serine 101, 106 to 108 (EPQ), and glutamine 112 each bind substrate. Cysteine 50 acts as the Nucleophile in catalysis. An NADP(+)-binding site is contributed by 181–186 (GAGETI). Residues 407-427 (FPATPGYRHPPVRPDDADPAP) are disordered. A compositionally biased stretch (basic and acidic residues) spans 418-427 (VRPDDADPAP).

The protein belongs to the glutamyl-tRNA reductase family. Homodimer.

The catalysed reaction is (S)-4-amino-5-oxopentanoate + tRNA(Glu) + NADP(+) = L-glutamyl-tRNA(Glu) + NADPH + H(+). It participates in porphyrin-containing compound metabolism; protoporphyrin-IX biosynthesis; 5-aminolevulinate from L-glutamyl-tRNA(Glu): step 1/2. Functionally, catalyzes the NADPH-dependent reduction of glutamyl-tRNA(Glu) to glutamate 1-semialdehyde (GSA). This is Glutamyl-tRNA reductase from Stenotrophomonas maltophilia (strain K279a).